Consider the following 361-residue polypeptide: Polyribonucleotide 5'-hydroxyl-kinase MJ1315 (361 aa).

39-46 lines the ATP pocket; the sequence is GGVDSGKT.

A divalent metal cation is required as a cofactor.

It carries out the reaction a 5'-end dephospho-2'-deoxyribonucleoside-DNA + ATP = a 5'-end 5'-phospho-2'-deoxyribonucleoside-DNA + ADP + H(+). The catalysed reaction is a 5'-end dephospho-ribonucleoside-RNA + ATP = a 5'-end 5'-phospho-ribonucleoside-RNA + ADP + H(+). Polynucleotide kinase that can phosphorylate the 5'-hydroxyl groups of both single-stranded RNA (ssRNA) and single-stranded DNA (ssDNA). Exhibits a strong preference for ssRNA. This chain is Polyribonucleotide 5'-hydroxyl-kinase MJ1315, found in Methanocaldococcus jannaschii (strain ATCC 43067 / DSM 2661 / JAL-1 / JCM 10045 / NBRC 100440) (Methanococcus jannaschii).